The sequence spans 321 residues: Beta-porphyranase B (321 aa).

A signal peptide spans 1–20 (MRKTVLYLSAASLFLSSYTL). The 289-residue stretch at 31–319 (EHIKNLPEAP…WVRAYKLVPI (289 aa)) folds into the GH16 domain. 5 residues coordinate substrate: Trp-72, Arg-76, Glu-173, Glu-178, and Glu-284. Glu-173 acts as the Nucleophile in catalysis. Catalysis depends on Glu-178, which acts as the Proton donor.

This sequence belongs to the glycosyl hydrolase 16 family.

The catalysed reaction is Hydrolysis of beta-D-galactopyranose-(1-&gt;4)-alpha-L-galactopyranose-6-sulfate linkages in porphyran.. Functionally, cleaves the sulfated polysaccharide porphyran at the (1-&gt;4) linkages between beta-D-galactopyranose and alpha-L-galactopyranose-6-sulfate, forming mostly the disaccharide alpha-L-galactopyranose-6-sulfate-(1-&gt;3)-beta-D-galactose. Some longer oligosaccharides of even number of residues are also observed. Inactive on the non-sulfated agarose portion of the porphyran backbone. The sequence is that of Beta-porphyranase B from Phocaeicola plebeius (strain DSM 17135 / JCM 12973 / CCUG 54634 / M2) (Bacteroides plebeius).